A 439-amino-acid chain; its full sequence is Xylose isomerase (439 aa).

Catalysis depends on residues histidine 101 and aspartate 104. 7 residues coordinate Mg(2+): glutamate 232, glutamate 268, histidine 271, aspartate 296, aspartate 307, aspartate 309, and aspartate 339.

Belongs to the xylose isomerase family. As to quaternary structure, homotetramer. The cofactor is Mg(2+).

The protein localises to the cytoplasm. The enzyme catalyses alpha-D-xylose = alpha-D-xylulofuranose. This Yersinia pseudotuberculosis serotype O:1b (strain IP 31758) protein is Xylose isomerase.